The sequence spans 492 residues: Cytochrome P450 2B19 (492 aa).

Ser129 is subject to Phosphoserine; by PKA. Cys437 lines the heme pocket.

Belongs to the cytochrome P450 family. It depends on heme as a cofactor. Expressed only in differentiated keratinocytes in skin.

The protein localises to the endoplasmic reticulum membrane. Its subcellular location is the microsome membrane. It catalyses the reaction an organic molecule + reduced [NADPH--hemoprotein reductase] + O2 = an alcohol + oxidized [NADPH--hemoprotein reductase] + H2O + H(+). Its function is as follows. Cytochromes P450 are a group of heme-thiolate monooxygenases. In liver microsomes, this enzyme is involved in an NADPH-dependent electron transport pathway. It oxidizes a variety of structurally unrelated compounds, including steroids, fatty acids, and xenobiotics. This Mus musculus (Mouse) protein is Cytochrome P450 2B19 (Cyp2b19).